The primary structure comprises 387 residues: Lipid-A-disaccharide synthase (387 aa).

Belongs to the LpxB family.

The enzyme catalyses a lipid X + a UDP-2-N,3-O-bis[(3R)-3-hydroxyacyl]-alpha-D-glucosamine = a lipid A disaccharide + UDP + H(+). It functions in the pathway bacterial outer membrane biogenesis; LPS lipid A biosynthesis. In terms of biological role, condensation of UDP-2,3-diacylglucosamine and 2,3-diacylglucosamine-1-phosphate to form lipid A disaccharide, a precursor of lipid A, a phosphorylated glycolipid that anchors the lipopolysaccharide to the outer membrane of the cell. This Nitrosococcus oceani (strain ATCC 19707 / BCRC 17464 / JCM 30415 / NCIMB 11848 / C-107) protein is Lipid-A-disaccharide synthase.